A 578-amino-acid polypeptide reads, in one-letter code: Probable arginine--tRNA ligase, mitochondrial (578 aa).

A mitochondrion-targeting transit peptide spans 1-16; it reads MACGFRRSIACQLSRV. Residues 133 to 135, H144, Y322, D326, and Q350 contribute to the L-arginine site; that span reads SPN. The 'HIGH' region motif lies at 133–144; sequence SPNIAKKFHVGH. An N6-acetyllysine modification is found at K568.

This sequence belongs to the class-I aminoacyl-tRNA synthetase family.

The protein localises to the mitochondrion membrane. The enzyme catalyses tRNA(Arg) + L-arginine + ATP = L-arginyl-tRNA(Arg) + AMP + diphosphate. Its function is as follows. Catalyzes the attachment of arginine to tRNA(Arg) in a two-step reaction: arginine is first activated by ATP to form Arg-AMP and then transferred to the acceptor end of tRNA(Arg). The protein is Probable arginine--tRNA ligase, mitochondrial (Rars2) of Mus musculus (Mouse).